A 314-amino-acid polypeptide reads, in one-letter code: Pathogenicity locus probable regulatory protein HrpR (314 aa).

The 229-residue stretch at 11–239 (TRWNVTALSA…LKSAANAICP (229 aa)) folds into the Sigma-54 factor interaction domain. Residues 39 to 46 (GETGTGKD) and 101 to 110 (SNGGTLYLDE) contribute to the ATP site. Residues 281–300 (FDAVLEELELPRRTLYHRMK) constitute a DNA-binding region (H-T-H motif).

In terms of biological role, member of the two-component regulatory system HrpR/HrpS that regulates the activation of the sigma factor hrpL which itself induces the expression of hprD as well as other hrp loci which are involved in plant pathogenicity, hrmA and avr genes. Probably interacts with sigma-54. In Pseudomonas syringae pv. syringae, this protein is Pathogenicity locus probable regulatory protein HrpR (hrpR).